We begin with the raw amino-acid sequence, 227 residues long: ATP-dependent dethiobiotin synthetase BioD (227 aa).

Residue 13 to 18 participates in ATP binding; that stretch reads DIGKTY. Threonine 17 serves as a coordination point for Mg(2+). Lysine 38 is a catalytic residue. Serine 42 contributes to the substrate binding site. ATP-binding positions include aspartate 55, 116-119, and 179-180; these read EGSG and NN. The Mg(2+) site is built by aspartate 55 and glutamate 116.

Belongs to the dethiobiotin synthetase family. Homodimer. Mg(2+) serves as cofactor.

It localises to the cytoplasm. It carries out the reaction (7R,8S)-7,8-diammoniononanoate + CO2 + ATP = (4R,5S)-dethiobiotin + ADP + phosphate + 3 H(+). It participates in cofactor biosynthesis; biotin biosynthesis; biotin from 7,8-diaminononanoate: step 1/2. In terms of biological role, catalyzes a mechanistically unusual reaction, the ATP-dependent insertion of CO2 between the N7 and N8 nitrogen atoms of 7,8-diaminopelargonic acid (DAPA, also called 7,8-diammoniononanoate) to form a ureido ring. The protein is ATP-dependent dethiobiotin synthetase BioD of Clostridium botulinum (strain Langeland / NCTC 10281 / Type F).